The sequence spans 351 residues: Cell division protein FtsZ (351 aa).

Residues Gly-31–Asn-35, Gly-118–Gly-120, Glu-149, Arg-153, and Asp-197 contribute to the GTP site.

It belongs to the FtsZ family. Homodimer. Polymerizes to form a dynamic ring structure in a strictly GTP-dependent manner. Interacts directly with several other division proteins. Interacts with FtsA.

It localises to the cytoplasm. Its function is as follows. Essential cell division protein that forms a contractile ring structure (Z ring) at the future cell division site. The regulation of the ring assembly controls the timing and the location of cell division. One of the functions of the FtsZ ring is to recruit other cell division proteins to the septum to produce a new cell wall between the dividing cells. Binds GTP and shows GTPase activity. The sequence is that of Cell division protein FtsZ from Thermotoga maritima (strain ATCC 43589 / DSM 3109 / JCM 10099 / NBRC 100826 / MSB8).